The chain runs to 524 residues: MAVPTNSCLLVCLLTLTVLQLPTLDSAAPFDVTAPQEPVLALVGSDAELTCGFSPNASSEYMELLWFRQTRSTAVLLYRDGQEQEGQQMTEYRGRATLATAGLLDGRATLLIRDVRVSDQGEYRCLFKDNDDFEEAAVYLKVAAVGSDPQISMTVQENGEMELECTSSGWYPEPQVQWRTGNREMLPSTSESKKHNEEGLFTVAVSMMIRDSSIKNMSCCIQNILLGQGKEVEISLPAPFVPRLTPWIVAVAIILLALGFLTIGSIFFTWKLYKERSSLRKKEFGSKERLLEELRCKKTVLHEVDVTLDPDTAHPHLFLYEDSKSVRLEDSRQILPDRPERFDSWPCVLGRETFTSGRHYWEVEVGDRTDWAIGVCRENVVKKGFDPMTPDNGFWAVELYGNGYWALTPLRTSLRLAGPPRRVGVFLDYDAGDISFYNMSNGSLIYTFPSISFSGPLRPFFCLWSCGKKPLTICSTANGPEKVTVIANVQDDIPLSPLGEGCTSGDKDTLHSKLIPFSPSQAAP.

An N-terminal signal peptide occupies residues 1 to 26 (MAVPTNSCLLVCLLTLTVLQLPTLDS). The Extracellular segment spans residues 27 to 247 (AAPFDVTAPQ…APFVPRLTPW (221 aa)). 2 Ig-like V-type domains span residues 29–141 (PFDV…VYLK) and 149–235 (PQIS…VEIS). Disulfide bonds link Cys51–Cys125 and Cys165–Cys219. N-linked (GlcNAc...) asparagine glycans are attached at residues Asn56 and Asn216. The chain crosses the membrane as a helical span at residues 248–268 (IVAVAIILLALGFLTIGSIFF). The Cytoplasmic portion of the chain corresponds to 269–524 (TWKLYKERSS…IPFSPSQAAP (256 aa)). Residues 286 to 480 (SKERLLEELR…LTICSTANGP (195 aa)) enclose the B30.2/SPRY domain.

The protein belongs to the immunoglobulin superfamily. BTN/MOG family. As to quaternary structure, seems to associate with xanthine dehydrogenase/oxidase. N-glycosylated. As to expression, strongly expressed in lactating mammary tissue (at protein level). About 100-fold lower levels in virgin mammary tissue. Also detected in spleen and thymus at 10-20 times lower levels compared to those detected in virgin mammary gland. Very low levels in several other tissues, including brain, heart, kidney, lymph node, lung and small intestine. In the thymus, detected in the stroma, in epithelial cells (at protein level). Most prominent in medullary areas of the thymus and at the corticomedullary junction (at protein level).

It localises to the membrane. In terms of biological role, may function in the secretion of milk-fat droplets. May act as a specific membrane-associated receptor for the association of cytoplasmic droplets with the apical plasma membrane. Inhibits the proliferation of CD4 and CD8 T-cells activated by anti-CD3 antibodies, T-cell metabolism and IL2 and IFNG secretion. In Mus musculus (Mouse), this protein is Butyrophilin subfamily 1 member A1 (Btn1a1).